Reading from the N-terminus, the 188-residue chain is MTNPDKQKPVEVTDVETAAEKTSEPTPASGTSTITQRWKREDLIKKASPITRGICLLFSLLAFLIMVSNKHGYGRNFNEYEEYRYVLAISIISTLYTAWQTFAHFSKREFFDRRTSTLVDFSGDQIVAYLLISAASSAIPLTNRFREGQDNIFTDSAASAISMAIFAFVALALSALFSGYKLSTHSFI.

Basic and acidic residues predominate over residues 1 to 11 (MTNPDKQKPVE). The segment at 1-34 (MTNPDKQKPVEVTDVETAAEKTSEPTPASGTSTI) is disordered. The Cytoplasmic portion of the chain corresponds to 1–46 (MTNPDKQKPVEVTDVETAAEKTSEPTPASGTSTITQRWKREDLIKK). Positions 24–34 (EPTPASGTSTI) are enriched in polar residues. Residues 47-67 (ASPITRGICLLFSLLAFLIMV) form a helical membrane-spanning segment. The Extracellular segment spans residues 68 to 84 (SNKHGYGRNFNEYEEYR). A helical transmembrane segment spans residues 85 to 105 (YVLAISIISTLYTAWQTFAHF). The Cytoplasmic portion of the chain corresponds to 106 to 120 (SKREFFDRRTSTLVD). Residues 121-141 (FSGDQIVAYLLISAASSAIPL) traverse the membrane as a helical segment. Residues 142-156 (TNRFREGQDNIFTDS) lie on the Extracellular side of the membrane. A helical transmembrane segment spans residues 157–177 (AASAISMAIFAFVALALSALF). Topologically, residues 178-188 (SGYKLSTHSFI) are cytoplasmic.

Belongs to the Casparian strip membrane proteins (CASP) family. In terms of assembly, homodimer and heterodimers.

Its subcellular location is the cell membrane. This is CASP-like protein 4B1 from Arabidopsis lyrata subsp. lyrata (Lyre-leaved rock-cress).